A 741-amino-acid chain; its full sequence is Pentatricopeptide repeat-containing protein At1g08070, chloroplastic (741 aa).

PPR repeat units follow at residues 98–132 (NLLI…GLLP), 133–167 (NSYT…GCDL), 168–202 (DLYV…DVVS), 203–229 (YTAL…IPVK), 230–264 (DVVS…NVRP), 265–299 (DEST…GFGS), 300–330 (NLKI…LPYK), 331–365 (DVIS…GETP), 366–396 (NDVT…IDKR), 403–433 (ASSL…ILHK), 434–468 (SLSS…GIQP), 469–499 (DDIT…MTQD), and 505–535 (KLEH…MEME). The segment at 540–615 (IWCSLLKACK…VPGCSSIEID (76 aa)) is type E motif. The tract at residues 616–646 (SVVHEFIIGDKFHPRNREIYGMLEEMEVLLE) is type E(+) motif. The segment at 647–741 (KAGFVPDTSE…DGVCSCNDYW (95 aa)) is type DYW motif.

It belongs to the PPR family. PCMP-H subfamily. As to quaternary structure, interacts with ORRM1. Interacts with VAR3/OZ1.

The protein localises to the plastid. The protein resides in the chloroplast. In terms of biological role, involved in multiple sites RNA editing events in chloroplasts. Involved in the editing of the site 9 of ndhB (ndhB-9) and site 1 of ndhG (ndhG-1) transcripts, which are two plastid-encoded subunits of the chloroplast NAD(P)H dehydrogenase (NDH) complex. Not essential for the activity of the NDH complex of the photosynthetic electron transport chain. The protein is Pentatricopeptide repeat-containing protein At1g08070, chloroplastic (PCMP-H12) of Arabidopsis thaliana (Mouse-ear cress).